A 500-amino-acid chain; its full sequence is Probable cytosol aminopeptidase 1 (500 aa).

Positions 263 and 268 each coordinate Mn(2+). Residue Lys-275 is part of the active site. Asp-287, Asp-346, and Glu-348 together coordinate Mn(2+). The active site involves Arg-350.

This sequence belongs to the peptidase M17 family. It depends on Mn(2+) as a cofactor.

Its subcellular location is the cytoplasm. The enzyme catalyses Release of an N-terminal amino acid, Xaa-|-Yaa-, in which Xaa is preferably Leu, but may be other amino acids including Pro although not Arg or Lys, and Yaa may be Pro. Amino acid amides and methyl esters are also readily hydrolyzed, but rates on arylamides are exceedingly low.. It catalyses the reaction Release of an N-terminal amino acid, preferentially leucine, but not glutamic or aspartic acids.. Presumably involved in the processing and regular turnover of intracellular proteins. Catalyzes the removal of unsubstituted N-terminal amino acids from various peptides. In Shewanella oneidensis (strain ATCC 700550 / JCM 31522 / CIP 106686 / LMG 19005 / NCIMB 14063 / MR-1), this protein is Probable cytosol aminopeptidase 1 (pepA1).